The following is an 88-amino-acid chain: Small ribosomal subunit protein uS15 (88 aa).

It belongs to the universal ribosomal protein uS15 family. In terms of assembly, part of the 30S ribosomal subunit. Forms a bridge to the 50S subunit in the 70S ribosome, contacting the 23S rRNA.

Its function is as follows. One of the primary rRNA binding proteins, it binds directly to 16S rRNA where it helps nucleate assembly of the platform of the 30S subunit by binding and bridging several RNA helices of the 16S rRNA. In terms of biological role, forms an intersubunit bridge (bridge B4) with the 23S rRNA of the 50S subunit in the ribosome. The polypeptide is Small ribosomal subunit protein uS15 (Geobacter metallireducens (strain ATCC 53774 / DSM 7210 / GS-15)).